The chain runs to 142 residues: MSLTKTEGTIIVSMWAKISTQADTIGTETLERLFLSHPQTKTYFPHFDLHPGSAQLRAHGSKVVAAVGDAVKSIDNIGGALSKLSELHAYILRVDPVNFKLLSHCLLVTLAARFPADFTAEAHAAWDKFLSVVSSVLTEKYR.

Ser-2 is modified (N-acetylserine). The region spanning 2–142 is the Globin domain; sequence SLTKTEGTII…VSSVLTEKYR (141 aa). Thr-29 carries the phosphothreonine modification. Ser-53 is modified (phosphoserine). His-59 serves as a coordination point for heme b. Phosphoserine is present on residues Ser-73 and Ser-82. His-88 is a heme b binding site.

The protein belongs to the globin family. In terms of assembly, heterotetramer of two zeta chains and beta-type chains.

The zeta chain is an alpha-type chain of mammalian embryonic hemoglobin. In Pan troglodytes (Chimpanzee), this protein is Hemoglobin subunit zeta (HBZ1).